The following is a 411-amino-acid chain: MKMVLSQRQREELNQAIADYLGSNGYSSALEAFRKEADISGEAERKIVGLLEKKWTSVIRLQKKVMELEAKLSEAEKEVIEGAPSRAKRSPGEWIPRPPEKFSLSGHRASITRVIFHPTYSLMLSASEDAVIKIWDFETGEYERSLKGHTSSVQDIAFDSQGKLLASCSADLSIKLWDFQQSYDCVKTMLGHDHNVSSVAFVPAGDYVLSASRDQTIKMWEVATGYCVKTYSGHREWIRMVRVHMDGNIFASCSIDHSIRIWSINSRDCKAELRAHDHTVECIAWAPDISTTHINEAAGSDNKKGHHQGPFLASGSRDKTIRVWDVGVGLCLFVLTGHDNWVRELTFHPGGKYLVSASDDKTIRVWDLRNKRFMKTLYAHQHFCTSVDFHKKLPYVISGSVDNTVKVWECR.

The LisH domain maps to 9–41; that stretch reads QREELNQAIADYLGSNGYSSALEAFRKEADISG. Residues 56–83 adopt a coiled-coil conformation; that stretch reads TSVIRLQKKVMELEAKLSEAEKEVIEGA. 7 WD repeats span residues 106–147, 149–187, 191–230, 233–272, 275–334, 337–376, and 379–411; these read GHRA…RSLK, HTSSVQDIAFDSQGKLLASCSADLSIKLWDFQQSYDCVK, GHDHNVSSVAFVPAGDYVLSASRDQTIKMWEVATGYCVKT, GHREWIRMVRVHMDGNIFASCSIDHSIRIWSINSRDCKAE, AHDH…CLFV, GHDNWVRELTFHPGGKYLVSASDDKTIRVWDLRNKRFMKT, and AHQHFCTSVDFHKKLPYVISGSVDNTVKVWECR.

The protein belongs to the WD repeat LIS1/nudF family.

Its subcellular location is the cytoplasm. It localises to the cytoskeleton. It is found in the microtubule organizing center. The protein localises to the centrosome. Its function is as follows. Positively regulates the activity of the minus-end directed microtubule motor protein dynein. May enhance dynein-mediated microtubule sliding by targeting dynein to the microtubule plus end. Required for several dynein- and microtubule-dependent processes. The protein is Lissencephaly-1 homolog of Glossina morsitans morsitans (Savannah tsetse fly).